Here is an 89-residue protein sequence, read N- to C-terminus: Small ribosomal subunit protein uS15 (89 aa).

It belongs to the universal ribosomal protein uS15 family. Part of the 30S ribosomal subunit. Forms a bridge to the 50S subunit in the 70S ribosome, contacting the 23S rRNA.

Functionally, one of the primary rRNA binding proteins, it binds directly to 16S rRNA where it helps nucleate assembly of the platform of the 30S subunit by binding and bridging several RNA helices of the 16S rRNA. Its function is as follows. Forms an intersubunit bridge (bridge B4) with the 23S rRNA of the 50S subunit in the ribosome. This chain is Small ribosomal subunit protein uS15, found in Heliobacterium modesticaldum (strain ATCC 51547 / Ice1).